Here is a 221-residue protein sequence, read N- to C-terminus: Cutinase 3 (221 aa).

Residues 1-17 form the signal peptide; sequence MRFHTILLAALASLVIA. 2 disulfide bridges follow: Cys-44–Cys-122 and Cys-70–Cys-84. The Nucleophile role is filled by Ser-133. Cys-184 and Cys-191 are disulfide-bonded. Asp-188 is an active-site residue. His-201 serves as the catalytic Proton donor/acceptor.

This sequence belongs to the cutinase family.

The protein localises to the secreted. It catalyses the reaction cutin + H2O = cutin monomers.. Catalyzes the hydrolysis of complex carboxylic polyesters found in the cell wall of plants. Degrades cutin, a macromolecule that forms the structure of the plant cuticle. Also degrades suberin, a specialized macromolecule found in the cell wall of various plant tissues. The chain is Cutinase 3 from Emericella nidulans (strain FGSC A4 / ATCC 38163 / CBS 112.46 / NRRL 194 / M139) (Aspergillus nidulans).